A 253-amino-acid polypeptide reads, in one-letter code: Probable transcriptional regulatory protein Tery_2125 (253 aa).

Belongs to the TACO1 family.

Its subcellular location is the cytoplasm. This Trichodesmium erythraeum (strain IMS101) protein is Probable transcriptional regulatory protein Tery_2125.